We begin with the raw amino-acid sequence, 1150 residues long: MEADWDELSRIPVPAPSVHALPTIATAIAFDDVMELLWGRITSFFGPELQRYTSVRAHPATEPVRQIIFHDRGVISLSPKSVHMITRRGLTQWHIAHEEMTDLRCMSFTAQTNRIIVAGCQKSMFTIDIDKGIIIDKLHTEYNYTIMKKSRYLCAATDTGSVNALSLNDFSVVKSWKAHGTAVNDMDARNDLLVTCGFSVRHLGSPIVDPLANVYDLKTLSPLPPIPFHAGAAYVRMHPKLHTTSFVASQTGQLQVVDLMNPNAINLRQANVSFMLGIDLSPSGEALAINDAECAIHLWGSPAKVHFNEMSKEAEFGDVAPRPPTLDWSPETPLSMIGMPYYHERLFSAWPSHLVFEVGSPPPQVDQALIPYLRPAELGHHAPNPKKTRRYQVENTRALASAEPALIAPKFLSEKAREQNKAKSEGAISDAAEALAGAKINGETDDDPLLKYSNVEIKYSRFGVDDFDFRFYNQTTFSGLETHIANSFTNALLQLFKFIPYIRNVALHHAASSCIFETCLLCEMGYLFDMLEKASGQNCQATNLLKTFSSYREASNLGLFEENLTNKSLSAAIQAVNRFFLGQISHDFRMISPSSDDLDHRLATVASESIRCMFCQNEIVRPGNSLVNELNYPAIDIKQARRNPAFRFSNILRASIEREAQNRGWCNYCRRYQQVAIRKSVHRMPQVLMLNAALTNPICRRLWAIPGWLPEEVGIVIEGGQILCFEGEDLKLRVQAKMPGLVVYDLVGLVCEIDIPEHQKAHLVSFINVSISSREPETKNKWHLFNDFLVTEVDKEEALRFNQPWKIPCVLAYQVQDGRHAMDDTWKDALDTTLLFRDWSLNGGRPVESRVTLSEEEKPTPGTPVALDTEFVDLEKAEIDVKADGSQEIVRPSKSGLARVSVLRGSGIREGVPFIDDYITIKENIVDYVTQYSGIKPGDLDPRVSQHNLVPLKVAYKKLWLLLNLGCVFVGHGLASDFRKVNIQVPKSQTVDTQYLFFHPGKNRRLSLRYLAWAVFKEYIQEEPADDSQGHDSIEDARMALRLWKKFKEYEDAGIVSQILEEIFREGSKLGFRPPPRNGVPTVLSRPGTAVTMQNNSGRNTPSTSDVAGAAASAPATPRQAFRRSIALTPSNGSFAGPGTGDFFSGSPLK.

WD repeat units lie at residues 96–139 (AHEE…DKLH) and 270–309 (ANVS…HFNE). A linker region spans residues 310-446 (MSKEAEFGDV…GAKINGETDD (137 aa)). The USP domain occupies 447-816 (DPLLKYSNVE…IPCVLAYQVQ (370 aa)). The 179-residue stretch at 865-1043 (VALDTEFVDL…IEDARMALRL (179 aa)) folds into the Exonuclease domain. Asp-868, Glu-870, Asp-977, and Asp-1036 together coordinate a divalent metal cation. A disordered region spans residues 1074–1150 (PPPRNGVPTV…GDFFSGSPLK (77 aa)). Residues 1091-1106 (VTMQNNSGRNTPSTSD) show a composition bias toward polar residues. The span at 1108-1120 (AGAAASAPATPRQ) shows a compositional bias: low complexity.

It belongs to the peptidase C19 family. PAN2 subfamily. In terms of assembly, forms a heterotrimer with an asymmetric homodimer of the regulatory subunit pan3 to form the poly(A)-nuclease (PAN) deadenylation complex. The cofactor is a divalent metal cation.

The protein resides in the cytoplasm. The enzyme catalyses Exonucleolytic cleavage of poly(A) to 5'-AMP.. Positively regulated by the regulatory subunit pan3. Catalytic subunit of the poly(A)-nuclease (PAN) deadenylation complex, one of two cytoplasmic mRNA deadenylases involved in mRNA turnover. PAN specifically shortens poly(A) tails of RNA and the activity is stimulated by poly(A)-binding protein pab1. PAN deadenylation is followed by rapid degradation of the shortened mRNA tails by the CCR4-NOT complex. Deadenylated mRNAs are then degraded by two alternative mechanisms, namely exosome-mediated 3'-5' exonucleolytic degradation, or deadenylation-dependent mRNA decaping and subsequent 5'-3' exonucleolytic degradation by xrn1. May also be involved in post-transcriptional maturation of mRNA poly(A) tails. The protein is PAN2-PAN3 deadenylation complex catalytic subunit pan2 of Aspergillus niger (strain ATCC MYA-4892 / CBS 513.88 / FGSC A1513).